Consider the following 141-residue polypeptide: Nucleoside diphosphate kinase (141 aa).

Lys11, Phe59, Arg87, Thr93, Arg104, and Asn114 together coordinate ATP. The Pros-phosphohistidine intermediate role is filled by His117.

This sequence belongs to the NDK family. Homotetramer. It depends on Mg(2+) as a cofactor.

Its subcellular location is the cytoplasm. The enzyme catalyses a 2'-deoxyribonucleoside 5'-diphosphate + ATP = a 2'-deoxyribonucleoside 5'-triphosphate + ADP. It carries out the reaction a ribonucleoside 5'-diphosphate + ATP = a ribonucleoside 5'-triphosphate + ADP. In terms of biological role, major role in the synthesis of nucleoside triphosphates other than ATP. The ATP gamma phosphate is transferred to the NDP beta phosphate via a ping-pong mechanism, using a phosphorylated active-site intermediate. This Neisseria meningitidis serogroup A / serotype 4A (strain DSM 15465 / Z2491) protein is Nucleoside diphosphate kinase.